Here is a 287-residue protein sequence, read N- to C-terminus: 3-methyl-2-oxobutanoate hydroxymethyltransferase (287 aa).

Positions 57 and 96 each coordinate Mg(2+). Residues 57–58 (DS), D96, and K125 each bind 3-methyl-2-oxobutanoate. Residue E127 coordinates Mg(2+). The Proton acceptor role is filled by E194.

The protein belongs to the PanB family. Homodecamer; pentamer of dimers. Requires Mg(2+) as cofactor.

The protein resides in the cytoplasm. It carries out the reaction 3-methyl-2-oxobutanoate + (6R)-5,10-methylene-5,6,7,8-tetrahydrofolate + H2O = 2-dehydropantoate + (6S)-5,6,7,8-tetrahydrofolate. It functions in the pathway cofactor biosynthesis; (R)-pantothenate biosynthesis; (R)-pantoate from 3-methyl-2-oxobutanoate: step 1/2. Its function is as follows. Catalyzes the reversible reaction in which hydroxymethyl group from 5,10-methylenetetrahydrofolate is transferred onto alpha-ketoisovalerate to form ketopantoate. This Methylobacterium sp. (strain 4-46) protein is 3-methyl-2-oxobutanoate hydroxymethyltransferase.